A 112-amino-acid chain; its full sequence is Integration host factor subunit alpha (112 aa).

The protein belongs to the bacterial histone-like protein family. Heterodimer of an alpha and a beta chain.

This protein is one of the two subunits of integration host factor, a specific DNA-binding protein that functions in genetic recombination as well as in transcriptional and translational control. This Allorhizobium ampelinum (strain ATCC BAA-846 / DSM 112012 / S4) (Agrobacterium vitis (strain S4)) protein is Integration host factor subunit alpha.